The primary structure comprises 154 residues: Putative pre-16S rRNA nuclease (154 aa).

Belongs to the YqgF nuclease family.

The protein resides in the cytoplasm. Its function is as follows. Could be a nuclease involved in processing of the 5'-end of pre-16S rRNA. This is Putative pre-16S rRNA nuclease from Rickettsia rickettsii (strain Iowa).